A 172-amino-acid chain; its full sequence is Translation initiation factor IF-3 (172 aa).

The protein belongs to the IF-3 family. In terms of assembly, monomer.

It localises to the cytoplasm. In terms of biological role, IF-3 binds to the 30S ribosomal subunit and shifts the equilibrium between 70S ribosomes and their 50S and 30S subunits in favor of the free subunits, thus enhancing the availability of 30S subunits on which protein synthesis initiation begins. The sequence is that of Translation initiation factor IF-3 from Campylobacter jejuni subsp. doylei (strain ATCC BAA-1458 / RM4099 / 269.97).